A 227-amino-acid chain; its full sequence is Thymidine kinase (227 aa).

Residues 15–22 (GSMFSGKT) and 87–90 (DEAQ) contribute to the ATP site. Glu-88 (proton acceptor) is an active-site residue. Zn(2+) contacts are provided by Cys-144, Cys-147, Cys-176, and Cys-179. The segment at 198-227 (RAVATDDADASTNEADPEAADAASADGTAA) is disordered. Over residues 217 to 227 (ADAASADGTAA) the composition is skewed to low complexity.

This sequence belongs to the thymidine kinase family. In terms of assembly, homotetramer.

Its subcellular location is the cytoplasm. It carries out the reaction thymidine + ATP = dTMP + ADP + H(+). This chain is Thymidine kinase, found in Salinibacter ruber (strain DSM 13855 / M31).